Here is a 340-residue protein sequence, read N- to C-terminus: Phosphoribosylformylglycinamidine cyclo-ligase (340 aa).

The protein belongs to the AIR synthase family.

It is found in the cytoplasm. It carries out the reaction 2-formamido-N(1)-(5-O-phospho-beta-D-ribosyl)acetamidine + ATP = 5-amino-1-(5-phospho-beta-D-ribosyl)imidazole + ADP + phosphate + H(+). The protein operates within purine metabolism; IMP biosynthesis via de novo pathway; 5-amino-1-(5-phospho-D-ribosyl)imidazole from N(2)-formyl-N(1)-(5-phospho-D-ribosyl)glycinamide: step 2/2. In Streptococcus pneumoniae (strain 70585), this protein is Phosphoribosylformylglycinamidine cyclo-ligase.